A 543-amino-acid chain; its full sequence is Chaperonin GroEL (543 aa).

ATP-binding positions include 31–34 (TMGP), 88–92 (DGTTT), Gly415, 479–481 (DAL), and Asp495.

This sequence belongs to the chaperonin (HSP60) family. As to quaternary structure, forms a cylinder of 14 subunits composed of two heptameric rings stacked back-to-back. Interacts with the co-chaperonin GroES.

It localises to the cytoplasm. It catalyses the reaction ATP + H2O + a folded polypeptide = ADP + phosphate + an unfolded polypeptide.. Its function is as follows. Together with its co-chaperonin GroES, plays an essential role in assisting protein folding. The GroEL-GroES system forms a nano-cage that allows encapsulation of the non-native substrate proteins and provides a physical environment optimized to promote and accelerate protein folding. This Clostridium tetani (strain Massachusetts / E88) protein is Chaperonin GroEL.